We begin with the raw amino-acid sequence, 59 residues long: Large ribosomal subunit protein bL32 (59 aa).

Over residues 1–16 (MAVPKRKTSPSKRGMR) the composition is skewed to basic residues. Residues 1-59 (MAVPKRKTSPSKRGMRRSADALKAPTYIEDKNSGELRRPHHIDLKTGMYRGRSVLPPKD) are disordered. The segment covering 28-44 (IEDKNSGELRRPHHIDL) has biased composition (basic and acidic residues).

Belongs to the bacterial ribosomal protein bL32 family.

This chain is Large ribosomal subunit protein bL32, found in Bartonella quintana (strain Toulouse) (Rochalimaea quintana).